The primary structure comprises 239 residues: 1-(5-phosphoribosyl)-5-[(5-phosphoribosylamino)methylideneamino] imidazole-4-carboxamide isomerase (239 aa).

The Proton acceptor role is filled by Asp-9. Asp-131 (proton donor) is an active-site residue.

The protein belongs to the HisA/HisF family.

The protein localises to the cytoplasm. It carries out the reaction 1-(5-phospho-beta-D-ribosyl)-5-[(5-phospho-beta-D-ribosylamino)methylideneamino]imidazole-4-carboxamide = 5-[(5-phospho-1-deoxy-D-ribulos-1-ylimino)methylamino]-1-(5-phospho-beta-D-ribosyl)imidazole-4-carboxamide. It functions in the pathway amino-acid biosynthesis; L-histidine biosynthesis; L-histidine from 5-phospho-alpha-D-ribose 1-diphosphate: step 4/9. This is 1-(5-phosphoribosyl)-5-[(5-phosphoribosylamino)methylideneamino] imidazole-4-carboxamide isomerase from Bacteroides fragilis (strain ATCC 25285 / DSM 2151 / CCUG 4856 / JCM 11019 / LMG 10263 / NCTC 9343 / Onslow / VPI 2553 / EN-2).